The following is a 181-amino-acid chain: Bifunctional protein PyrR (181 aa).

Residues arginine 39 to arginine 40, aspartate 104 to threonine 112, arginine 137, and valine 161 each bind substrate. Residues valine 100 to threonine 112 carry the PRPP-binding motif.

It belongs to the purine/pyrimidine phosphoribosyltransferase family. PyrR subfamily.

The enzyme catalyses UMP + diphosphate = 5-phospho-alpha-D-ribose 1-diphosphate + uracil. Regulates the transcription of the pyrimidine nucleotide (pyr) operon in response to exogenous pyrimidines. In terms of biological role, also displays a weak uracil phosphoribosyltransferase activity which is not physiologically significant. The chain is Bifunctional protein PyrR from Pasteurella multocida (strain Pm70).